The sequence spans 424 residues: 3-isopropylmalate dehydratase large subunit 2 (424 aa).

3 residues coordinate [4Fe-4S] cluster: Cys299, Cys359, and Cys362.

Belongs to the aconitase/IPM isomerase family. LeuC type 2 subfamily. Heterodimer of LeuC and LeuD. It depends on [4Fe-4S] cluster as a cofactor.

It catalyses the reaction (2R,3S)-3-isopropylmalate = (2S)-2-isopropylmalate. It functions in the pathway amino-acid biosynthesis; L-leucine biosynthesis; L-leucine from 3-methyl-2-oxobutanoate: step 2/4. In terms of biological role, catalyzes the isomerization between 2-isopropylmalate and 3-isopropylmalate, via the formation of 2-isopropylmaleate. The chain is 3-isopropylmalate dehydratase large subunit 2 from Rubrobacter xylanophilus (strain DSM 9941 / JCM 11954 / NBRC 16129 / PRD-1).